Consider the following 351-residue polypeptide: Biotin synthase (351 aa).

The region spanning 48 to 265 (NKVRIHILDN…LCMFRLINPD (218 aa)) is the Radical SAM core domain. The [4Fe-4S] cluster site is built by C63, C67, and C70. Residues C107, C139, C199, and R269 each coordinate [2Fe-2S] cluster.

This sequence belongs to the radical SAM superfamily. Biotin synthase family. As to quaternary structure, homodimer. [4Fe-4S] cluster serves as cofactor. The cofactor is [2Fe-2S] cluster.

The enzyme catalyses (4R,5S)-dethiobiotin + (sulfur carrier)-SH + 2 reduced [2Fe-2S]-[ferredoxin] + 2 S-adenosyl-L-methionine = (sulfur carrier)-H + biotin + 2 5'-deoxyadenosine + 2 L-methionine + 2 oxidized [2Fe-2S]-[ferredoxin]. The protein operates within cofactor biosynthesis; biotin biosynthesis; biotin from 7,8-diaminononanoate: step 2/2. In terms of biological role, catalyzes the conversion of dethiobiotin (DTB) to biotin by the insertion of a sulfur atom into dethiobiotin via a radical-based mechanism. The protein is Biotin synthase of Leptospira interrogans serogroup Icterohaemorrhagiae serovar Lai (strain 56601).